Reading from the N-terminus, the 257-residue chain is Fructose-2,6-bisphosphatase TIGAR B (257 aa).

The active-site Tele-phosphohistidine intermediate is the H11. Residue E89 is the Proton donor/acceptor of the active site.

This sequence belongs to the phosphoglycerate mutase family.

The protein localises to the cytoplasm. It localises to the nucleus. The protein resides in the mitochondrion. It carries out the reaction beta-D-fructose 2,6-bisphosphate + H2O = beta-D-fructose 6-phosphate + phosphate. Fructose-bisphosphatase hydrolyzing fructose-2,6-bisphosphate as well as fructose-1,6-bisphosphate. Acts as a negative regulator of glycolysis by lowering intracellular levels of fructose-2,6-bisphosphate in a p53/TP53-dependent manner, resulting in the pentose phosphate pathway (PPP) activation and NADPH production. Contributes to the generation of reduced glutathione to cause a decrease in intracellular reactive oxygen species (ROS) content, correlating with its ability to protect cells from oxidative or metabolic stress-induced cell death. May play a role in mitophagy inhibition. This is Fructose-2,6-bisphosphatase TIGAR B from Danio rerio (Zebrafish).